Consider the following 292-residue polypeptide: RNA-binding P34 protein (292 aa).

A helical membrane pass occupies residues 29–46; it reads CAIYTVACRILFLSVGFM. The interval 219–292 is RNA-binding; that stretch reads EGFKSPQVEY…NFKAKNKNNE (74 aa).

The protein resides in the host endoplasmic reticulum membrane. Acts as a ssRNA-binding protein that may be involved in targeting RNA2 to replication sites or facilitating RNA2 replication. The chain is RNA-binding P34 protein from Lettuce infectious yellows virus (isolate United States/92) (LIYV).